The sequence spans 398 residues: S-adenosylmethionine synthase (398 aa).

H16 contacts ATP. Mg(2+) is bound at residue D18. E51 provides a ligand contact to K(+). E64 and Q108 together coordinate L-methionine. The tract at residues 108–118 (QSADIAQGVDA) is flexible loop. ATP is bound by residues 176–178 (DSK), 242–243 (KF), D251, 257–258 (RK), A274, and K278. D251 contacts L-methionine. K282 contributes to the L-methionine binding site.

The protein belongs to the AdoMet synthase family. As to quaternary structure, homotetramer; dimer of dimers. Mg(2+) is required as a cofactor. It depends on K(+) as a cofactor.

Its subcellular location is the cytoplasm. It catalyses the reaction L-methionine + ATP + H2O = S-adenosyl-L-methionine + phosphate + diphosphate. It participates in amino-acid biosynthesis; S-adenosyl-L-methionine biosynthesis; S-adenosyl-L-methionine from L-methionine: step 1/1. In terms of biological role, catalyzes the formation of S-adenosylmethionine (AdoMet) from methionine and ATP. The overall synthetic reaction is composed of two sequential steps, AdoMet formation and the subsequent tripolyphosphate hydrolysis which occurs prior to release of AdoMet from the enzyme. This chain is S-adenosylmethionine synthase, found in Bradyrhizobium diazoefficiens (strain JCM 10833 / BCRC 13528 / IAM 13628 / NBRC 14792 / USDA 110).